We begin with the raw amino-acid sequence, 5900 residues long: Midasin (5900 aa).

Residues 250 to 270 (GSSVKSKKGGEQQQEGEGEDE) form a disordered region. AAA-ATPase protomer regions lie at residues 278–583 (TNTV…LRKQ), 673–1012 (EKIS…ALNY), 1101–1346 (PIIP…IAGY), 1411–1721 (IVWT…MDKQ), 1840–2089 (RGMQ…HVLT), and 2167–2451 (LENI…EIYM). ATP contacts are provided by residues 302–309 (GVTGSGKT) and 689–696 (GETGTGKT). The tract at residues 796–826 (QTTTNNTKENNNNNNNNNNNNNNNNNNKKRT) is disordered. The span at 797 to 821 (TTTNNTKENNNNNNNNNNNNNNNNN) shows a compositional bias: low complexity. Residues 1135-1142 (GPTSSGKT), 1438-1445 (GETGCSKT), 1852-1859 (GSPGVGKT), and 2184-2191 (GPTSTSKT) contribute to the ATP site. A linker region spans residues 2562 to 4965 (ESAIKSILCE…EGKGKKDVSD (2404 aa)). Residues 4932–5598 (GDDGEGGEGG…SVEEKKLTRE (667 aa)) are disordered. A compositionally biased stretch (acidic residues) spans 4984 to 5008 (KDEDEDEEKEEKDEDEGFDMQDDFE). The segment covering 5009–5055 (GEMHDIKKDENKDEDKKDDPNNEKENDKEMGDLEKPEDNVVDEKLWD) has biased composition (basic and acidic residues). Residues 5056 to 5076 (EQDVQDEEEQDEEGKGDETNS) are compositionally biased toward acidic residues. Basic and acidic residues predominate over residues 5079 to 5113 (MMAKQDGKDDNDDDKKDDDKKDDKKKKKEENGKPD). 2 stretches are compositionally biased toward acidic residues: residues 5114 to 5130 (ENEEGEEGKDDEEEDGK) and 5139 to 5156 (GASDEDDFGQEENEDDVI). The span at 5159-5173 (EQEKEENHGDPRGDD) shows a compositional bias: basic and acidic residues. Residues 5174–5199 (QMEIPEDLELEDPDEGKEDDEQQDGG) are compositionally biased toward acidic residues. Over residues 5213–5224 (DVSKEEEKKKEL) the composition is skewed to basic and acidic residues. 2 stretches are compositionally biased toward acidic residues: residues 5225-5255 (DGDEKEESDQDGDEEKEDEEKEDGDEDEDKE) and 5273-5286 (EGDEPEKEQPEEDQ). Basic and acidic residues predominate over residues 5297 to 5313 (ETPKDSEQPLGVKDKTG). The span at 5339 to 5349 (GMTQPTPSEND) shows a compositional bias: polar residues. The segment covering 5410–5442 (SEPKEKAPKQDPNAKENENQDYEFIKDDEKLDK) has biased composition (basic and acidic residues). The span at 5448–5460 (QALAAATDTQLQD) shows a compositional bias: low complexity. Residues 5469-5487 (DQAEQEEDQMDIDEEDDMD) show a composition bias toward acidic residues. Basic and acidic residues-rich tracts occupy residues 5488 to 5536 (VDHK…KDQQ) and 5551 to 5570 (QFTKEQLENLTNLDKEKAVL). Acidic residues predominate over residues 5571–5590 (DDGDDQEMEQDGDQDDEESV). Residues 5696–5889 (QVLLAIDDTE…NIPSILSDTL (194 aa)) enclose the VWFA domain.

This sequence belongs to the midasin family. Associates with pre-60S ribosomes in the nucleoplasm.

The protein localises to the nucleus. The protein resides in the nucleolus. It localises to the nucleoplasm. Its function is as follows. Nuclear chaperone required for maturation and nuclear export of pre-60S ribosome subunits. Functions at successive maturation steps to remove ribosomal factors at critical transition points, first driving the exit of early pre-60S particles from the nucleolus and then driving late pre-60S particles from the nucleus. The protein is Midasin (mdn1) of Dictyostelium discoideum (Social amoeba).